A 241-amino-acid polypeptide reads, in one-letter code: 1-(5-phosphoribosyl)-5-[(5-phosphoribosylamino)methylideneamino] imidazole-4-carboxamide isomerase (241 aa).

Aspartate 7 (proton acceptor) is an active-site residue. Aspartate 129 (proton donor) is an active-site residue.

The protein belongs to the HisA/HisF family.

Its subcellular location is the cytoplasm. It catalyses the reaction 1-(5-phospho-beta-D-ribosyl)-5-[(5-phospho-beta-D-ribosylamino)methylideneamino]imidazole-4-carboxamide = 5-[(5-phospho-1-deoxy-D-ribulos-1-ylimino)methylamino]-1-(5-phospho-beta-D-ribosyl)imidazole-4-carboxamide. Its pathway is amino-acid biosynthesis; L-histidine biosynthesis; L-histidine from 5-phospho-alpha-D-ribose 1-diphosphate: step 4/9. The sequence is that of 1-(5-phosphoribosyl)-5-[(5-phosphoribosylamino)methylideneamino] imidazole-4-carboxamide isomerase from Buchnera aphidicola subsp. Baizongia pistaciae (strain Bp).